Reading from the N-terminus, the 103-residue chain is Large ribosomal subunit protein uL24 (103 aa).

It belongs to the universal ribosomal protein uL24 family. In terms of assembly, part of the 50S ribosomal subunit.

Its function is as follows. One of two assembly initiator proteins, it binds directly to the 5'-end of the 23S rRNA, where it nucleates assembly of the 50S subunit. In terms of biological role, one of the proteins that surrounds the polypeptide exit tunnel on the outside of the subunit. This chain is Large ribosomal subunit protein uL24, found in Lacticaseibacillus casei (strain BL23) (Lactobacillus casei).